The chain runs to 348 residues: Anthranilate phosphoribosyltransferase (348 aa).

Residues glycine 81, 84–85 (GD), threonine 89, 91–94 (NIST), 109–117 (KHGNRSSSG), and serine 121 contribute to the 5-phospho-alpha-D-ribose 1-diphosphate site. Residue glycine 81 participates in anthranilate binding. A Mg(2+)-binding site is contributed by serine 93. Asparagine 112 is a binding site for anthranilate. Arginine 167 is a binding site for anthranilate. Residues aspartate 226 and glutamate 227 each coordinate Mg(2+).

The protein belongs to the anthranilate phosphoribosyltransferase family. Homodimer. Requires Mg(2+) as cofactor.

The enzyme catalyses N-(5-phospho-beta-D-ribosyl)anthranilate + diphosphate = 5-phospho-alpha-D-ribose 1-diphosphate + anthranilate. It participates in amino-acid biosynthesis; L-tryptophan biosynthesis; L-tryptophan from chorismate: step 2/5. Catalyzes the transfer of the phosphoribosyl group of 5-phosphorylribose-1-pyrophosphate (PRPP) to anthranilate to yield N-(5'-phosphoribosyl)-anthranilate (PRA). This is Anthranilate phosphoribosyltransferase from Nitrosopumilus maritimus (strain SCM1).